The sequence spans 287 residues: uncharacterized protein (287 aa).

GTP is bound by residues glycine 43–serine 50, aspartate 90–glycine 93, and aspartate 156–glutamate 159. The G domain occupies glycine 48–isoleucine 140.

It to E.coli YkfA and YeeP.

This is an uncharacterized protein from Escherichia coli (strain K12).